A 217-amino-acid polypeptide reads, in one-letter code: Meiotically up-regulated gene 37 protein (217 aa).

Its function is as follows. Has a role in meiosis. In Schizosaccharomyces pombe (strain 972 / ATCC 24843) (Fission yeast), this protein is Meiotically up-regulated gene 37 protein (mug37).